Consider the following 339-residue polypeptide: Cullin-associated NEDD8-dissociated protein 1, N-terminal part (339 aa).

HEAT repeat units lie at residues 5-42 (HTIQ…NPCS) and 50-87 (ASAT…RLPL).

In terms of assembly, interacts with candA-C. Interacts with unneddylated cullins culA and culD; interaction occurs only when complexed with candA-C.

The protein resides in the nucleus. Assembly factor of SCF (SKP1-CUL1-F-box protein) E3 ubiquitin ligase complexes that promotes the exchange of the substrate-recognition F-box subunit in SCF complexes, thereby playing a key role in the cellular repertoire of SCF complexes. Acts as a F-box protein exchange factor when interacting with candA-C. This Emericella nidulans (strain FGSC A4 / ATCC 38163 / CBS 112.46 / NRRL 194 / M139) (Aspergillus nidulans) protein is Cullin-associated NEDD8-dissociated protein 1, N-terminal part (candA-N).